Reading from the N-terminus, the 496-residue chain is MTKLQQTLYQFFGFTSFKKGQQDIIESILSGKDTIAMLPTGGGKSLCYQLPGYMLDGMVLIVSPLLSLMEDQVQQLKARGEKRAAALNSMLNRQERQFVLEHIHRYKFLYLSPEALQSPYVLEKLKSVPISLFVIDEAHCISEWGHDFRPDYSKLGQLRKKLGHPPVLALTATATKETLQDVMNLLELQHAVRHLNSVNRPNIALRVENAADTAEKIDRVIQLVENLQGPGIVYCPTRKWAKELAGEIKSKTSSRADFYHGGLESGDRILIQQQFIHNQLDVICCTNAFGMGVDKPDIRYVIHFHLPQTAEAFMQEIGRAGRDGKPSVSILLRAPGDFELQEQIIQMESVTAEEIADVIRVLEKTEERDERRLRDVLLQYGVGETQARMMIHLFMQGKTSVELMKKEISYRMELKLEKMHRVSFLLQRDGCLRQALLTYFDESYEPDDGNLPCCSHCGFDLSLYEQKGERSKMAPLDSWSSELHRIFSLQTVGELN.

Residues 25 to 192 (IESILSGKDT…MNLLELQHAV (168 aa)) enclose the Helicase ATP-binding domain. 38-45 (LPTGGGKS) provides a ligand contact to ATP. Positions 136-139 (DEAH) match the DEAH box motif. In terms of domain architecture, Helicase C-terminal spans 219–363 (RVIQLVENLQ…EIADVIRVLE (145 aa)).

Belongs to the helicase family. RecQ subfamily. In terms of assembly, interacts with SSB (ssbA) and YpbB.

It localises to the cytoplasm. The protein resides in the nucleoid. The catalysed reaction is Couples ATP hydrolysis with the unwinding of duplex DNA by translocating in the 3'-5' direction.. It catalyses the reaction ATP + H2O = ADP + phosphate + H(+). Its function is as follows. Probable 3'-5' DNA helicase. Required in synaptic and/or post-synaptic stages of recombination. Probably has an overlapping function with RecQ. It probably acts to help generate ss-DNA from ds-DNA breaks. The protein is Probable ATP-dependent DNA helicase RecS of Bacillus subtilis (strain 168).